Here is a 146-residue protein sequence, read N- to C-terminus: Hemoglobin subunit beta (146 aa).

Val-1 bears the N-acetylvaline mark. Residues 2–146 (NLTAAEKTQV…VANALAHKYH (145 aa)) form the Globin domain. A Phosphothreonine modification is found at Thr-12. The residue at position 59 (Lys-59) is an N6-acetyllysine. His-63 contributes to the heme b binding site. Lys-82 is modified (N6-acetyllysine). His-92 contacts heme b. Residue Cys-93 is modified to S-nitrosocysteine. Lys-144 bears the N6-acetyllysine mark.

The protein belongs to the globin family. Heterotetramer of two alpha chains and two beta chains. In terms of tissue distribution, red blood cells.

Its function is as follows. Involved in oxygen transport from the lung to the various peripheral tissues. The sequence is that of Hemoglobin subunit beta (HBB) from Loxodonta africana (African elephant).